The primary structure comprises 473 residues: Photosystem II CP43 reaction center protein (473 aa).

Residues methionine 1 to glutamate 14 constitute a propeptide that is removed on maturation. At threonine 15 the chain carries N-acetylthreonine. Threonine 15 is modified (phosphothreonine). A run of 5 helical transmembrane segments spans residues leucine 69–alanine 93, leucine 134–asparagine 155, lysine 178–threonine 200, lysine 255–serine 275, and tryptophan 291–alanine 312. Residue glutamate 367 coordinates [CaMn4O5] cluster. Residues arginine 447 to proline 471 traverse the membrane as a helical segment.

This sequence belongs to the PsbB/PsbC family. PsbC subfamily. In terms of assembly, PSII is composed of 1 copy each of membrane proteins PsbA, PsbB, PsbC, PsbD, PsbE, PsbF, PsbH, PsbI, PsbJ, PsbK, PsbL, PsbM, PsbT, PsbX, PsbY, PsbZ, Psb30/Ycf12, at least 3 peripheral proteins of the oxygen-evolving complex and a large number of cofactors. It forms dimeric complexes. Requires Binds multiple chlorophylls and provides some of the ligands for the Ca-4Mn-5O cluster of the oxygen-evolving complex. It may also provide a ligand for a Cl- that is required for oxygen evolution. PSII binds additional chlorophylls, carotenoids and specific lipids. as cofactor.

It localises to the plastid. Its subcellular location is the chloroplast thylakoid membrane. In terms of biological role, one of the components of the core complex of photosystem II (PSII). It binds chlorophyll and helps catalyze the primary light-induced photochemical processes of PSII. PSII is a light-driven water:plastoquinone oxidoreductase, using light energy to abstract electrons from H(2)O, generating O(2) and a proton gradient subsequently used for ATP formation. This chain is Photosystem II CP43 reaction center protein, found in Piper cenocladum (Ant piper).